Consider the following 1984-residue polypeptide: Sodium channel protein type 9 subunit alpha (1984 aa).

Topologically, residues 1–125 (MAMLPPPGPQ…RRISIKILVH (125 aa)) are cytoplasmic. Residues 26-39 (RISEEKAKGHKDEK) are compositionally biased toward basic and acidic residues. Positions 26–55 (RISEEKAKGHKDEKKDDEEEGPKPSSDLEA) are disordered. The I repeat unit spans residues 112-410 (FSPLRRISIK…VAMAYEEQNQ (299 aa)). The chain crosses the membrane as a helical span at residues 126–145 (SLFSMLIMCTILTNCIFMTM). Residues 146-150 (SNPPD) lie on the Extracellular side of the membrane. The chain crosses the membrane as a helical span at residues 151 to 172 (WTKNVEYTFTGIYTFESLIKIL). At 173–185 (ARGFCVGEFTFLR) the chain is on the cytoplasmic side. Residues 186–204 (DPWNWLDFVVIVFAYLTEF) traverse the membrane as a helical segment. Over 205-210 (VNLGNV) the chain is Extracellular. A helical transmembrane segment spans residues 211–227 (SALRTFRVLRALKTISV). The Cytoplasmic portion of the chain corresponds to 228 to 241 (IPGLKTIVGALIQS). A helical membrane pass occupies residues 242-267 (VKKLSDVMILTVFCLSVFALIGLQLF). Topologically, residues 268 to 346 (MGNLKHKCFR…PDYGYTSFDT (79 aa)) are extracellular. An intrachain disulfide couples cysteine 275 to cysteine 324. An intramembrane region (pore-forming) is located at residues 347–363 (FGWAFLALFRLMTQDYW). Residues 364–376 (ENLYQQTLRAAGK) lie on the Extracellular side of the membrane. The chain crosses the membrane as a helical span at residues 377 to 402 (TYMIFFVVVIFLGSFYLINLILAVVA). Residues 402–449 (AMAYEEQNQANIEEAKQKELEFQQMLDRLKKEQEEAEAIAAAAAEYTS) adopt a coiled-coil conformation. Topologically, residues 403–744 (MAYEEQNQAN…FIYFIVMDPF (342 aa)) are cytoplasmic. A compositionally biased stretch (low complexity) spans 458-471 (LSESSSETSRLSSK). Disordered regions lie at residues 458–540 (LSES…SIRG) and 574–609 (HSIFGDNESRRGSLFVPHRPRERRSSNISQASRSPP). Positions 474–486 (KERRNRRKKKKQK) are enriched in basic residues. Basic and acidic residues-rich tracts occupy residues 489–509 (SGEEKGDDEKLSKSGSEESIR) and 574–584 (HSIFGDNESRR). The stretch at 684–708 (LRQRAMSRASILTNTVEELEESRQK) forms a coiled coil. The stretch at 725 to 988 (CSPYWIKFKK…EEDTDANNLQ (264 aa)) is one II repeat. The helical transmembrane segment at 745 to 761 (VDLAITICIVLNTLFMA) threads the bilayer. Topologically, residues 762–770 (MEHHPMTDE) are extracellular. Residues 771-795 (FKNVLAVGNLVFTGIFAAEMVLKLI) form a helical membrane-spanning segment. Residues 796-804 (AMDPYEYFQ) lie on the Cytoplasmic side of the membrane. Residues 805 to 821 (VGWNIFDSLIVTLSLVE) form a helical membrane-spanning segment. Residues 822–830 (LFLADVEGL) are Extracellular-facing. Residues 831 to 847 (SVLRSFRLLRVFKLAKS) form a helical membrane-spanning segment. Over 848-864 (WPTLNMLIKIIGNSVGA) the chain is Cytoplasmic. Residues 865-887 (LGNLTLVLAIIVFIFAVVGMQLF) form a helical membrane-spanning segment. Residues 888 to 914 (GKSYKECVCKINENCKLPRWHMNDFFH) are Extracellular-facing. A disulfide bridge connects residues cysteine 896 and cysteine 902. The pore-forming intramembrane region spans 915–927 (SFLIVFRVLCGEW). The Extracellular portion of the chain corresponds to 928–939 (IETMWDCMEVAG). Residues cysteine 934 and cysteine 943 are joined by a disulfide bond. Residues 940-966 (QTMCLIVYMMVMVIGNLVVLNLFLALL) form a helical membrane-spanning segment. The Cytoplasmic segment spans residues 967–1185 (LSSFSSDNLT…WWTIRKTCYR (219 aa)). 2 disordered regions span residues 1015–1039 (KKPKGSKDTKRTADPNNKRENYISN) and 1089–1145 (PIAP…EPIN). Over residues 1019 to 1035 (GSKDTKRTADPNNKREN) the composition is skewed to basic and acidic residues. The segment covering 1135–1145 (GEEEAEAEPIN) has biased composition (acidic residues). The stretch at 1178-1486 (TIRKTCYRIV…KKYYNAMKKL (309 aa)) is one III repeat. A helical membrane pass occupies residues 1186 to 1210 (IVEHSWFESFIVLMILLSSGALAFE). Residues 1211-1222 (DIYIEKKKTIKI) are Extracellular-facing. Residues 1223–1248 (ILEYADKIFTYIFILEMLLKWVAYGY) traverse the membrane as a helical segment. The Cytoplasmic portion of the chain corresponds to 1249–1250 (KT). Residues 1251-1276 (YFTNAWCWLDFLIVDVSLVTLVANTL) traverse the membrane as a helical segment. At 1277–1285 (GYSDLGPIK) the chain is on the extracellular side. A helical transmembrane segment spans residues 1286–1302 (SLRTLRALRPLRALSRF). The Cytoplasmic segment spans residues 1303–1315 (EGMRVVVNALIGA). A helical membrane pass occupies residues 1316 to 1340 (IPSIMNVLLVCLIFWLIFSIMGVNL). Topologically, residues 1341 to 1392 (FAGKFYECVNTTDGSRFSVSQVANRSECFALMNVSGNVRWKNLKVNFDNVGL) are extracellular. Cysteine 1348 and cysteine 1368 form a disulfide bridge. Positions 1393-1403 (GYLSLLQVATF) form an intramembrane region, pore-forming. Over 1404 to 1429 (KGWMDIMYAAVDSVNVNAQPIYEYNL) the chain is Extracellular. Residues 1430–1455 (YMYIYFVIFIIFGSFFTLNLFIGVII) form a helical membrane-spanning segment. Residues 1456–1512 (DNFNQQKKKLGGQDIFMTEEQKKYYNAMKKLGSKKPQKPIPRPGNKFQGCIFDLVTN) lie on the Cytoplasmic side of the membrane. Position 1488 is a phosphoserine; by PKC (serine 1488). Residues 1495 to 1793 (IPRPGNKFQG…WEKFDPDATQ (299 aa)) form an IV repeat. Residues 1513–1532 (QAFDITIMVLICLNMVTMMV) traverse the membrane as a helical segment. Residues 1533-1543 (EKEGQTDYMSF) are Extracellular-facing. A helical membrane pass occupies residues 1544 to 1565 (VLYWINVVFIILFTGECVLKLI). The Cytoplasmic segment spans residues 1566 to 1574 (SLRHYYFTV). Residues 1575–1596 (GWNIFDFVVVILSIVGMFLAEM) form a helical membrane-spanning segment. At 1597–1605 (IEKYFVSPT) the chain is on the extracellular side. Residues 1606–1625 (LFRVIRLARIGRILRLIKGA) traverse the membrane as a helical segment. The Cytoplasmic portion of the chain corresponds to 1626-1638 (KGIRTLLFALMMS). Residues 1639–1661 (LPALFNIGLLLFLVMFIYAIFGM) traverse the membrane as a helical segment. The Extracellular segment spans residues 1662–1684 (SNFAYVKKEAGINDMFNFETFGN). Positions 1685-1697 (SMICLFQITTSAG) form an intramembrane region, pore-forming. Topologically, residues 1698-1731 (WDGLLAPILNSAPPDCDPKKVHPGSSVEGDCGNP) are extracellular. Cysteines 1713 and 1728 form a disulfide. The chain crosses the membrane as a helical span at residues 1732-1757 (SVGIFYFVSYIIISFLVVVNMYIAVI). The Cytoplasmic portion of the chain corresponds to 1758–1984 (LENFSVATEE…EDKEKDESRK (227 aa)). The 30-residue stretch at 1887–1916 (EDVSATIIQRAYRRYRLRQNVKNISSIYIK) folds into the IQ domain. The interval 1933 to 1984 (DNVNENSSPEKTDATASTISPPSYDSVTKPDQEKYETDKTEKEDKEKDESRK) is disordered. The span at 1946–1958 (ATASTISPPSYDS) shows a compositional bias: polar residues. A compositionally biased stretch (basic and acidic residues) spans 1960 to 1984 (TKPDQEKYETDKTEKEDKEKDESRK).

The protein belongs to the sodium channel (TC 1.A.1.10) family. Nav1.7/SCN9A subfamily. In terms of assembly, the Nav1.7 voltage-gated sodium channel consists of an ion-conducting alpha subunit SCN9A which is functional on its own regulated by one or more beta-1 (SCN1B), beta-2 (SCN2B), beta-3 (SCN3B) and beta-4 (SCN4B) subunits. SCN1B and SCN3B are non-covalently associated with SCN9A. SCN2B and SCN4B are disulfide-linked to SCN9A. SCN1B regulates channel inactivation. Interacts with NEDD4 and NEDD4L; regulates Nav1.7 activity most probably through ubiquitination and subsequent endocytosis. Interacts with TMEM233; modulates the gating properties of NaV1.7. Post-translationally, ubiquitinated by NEDD4L; which may promote its endocytosis. In terms of processing, phosphorylation at Ser-1488 by PKC in a highly conserved cytoplasmic loop increases peak sodium currents. As to expression, expressed strongly in sciatic nerves, with moderate levels in kidney. Not detected in liver, brain and muscle.

The protein resides in the cell membrane. It is found in the cell projection. It localises to the neuron projection. The protein localises to the axon. It catalyses the reaction Na(+)(in) = Na(+)(out). Its function is as follows. Pore-forming subunit of Nav1.7, a voltage-gated sodium (Nav) channel that directly mediates the depolarizing phase of action potentials in excitable membranes. Navs, also called VGSCs (voltage-gated sodium channels) or VDSCs (voltage-dependent sodium channels), operate by switching between closed and open conformations depending on the voltage difference across the membrane. In the open conformation they allow Na(+) ions to selectively pass through the pore, along their electrochemical gradient. The influx of Na(+) ions provokes membrane depolarization, initiating the propagation of electrical signals throughout cells and tissues. Nav1.7 plays a crucial role in controlling the excitability and action potential propagation from nociceptor neurons, thereby contributing to the sensory perception of pain. This is Sodium channel protein type 9 subunit alpha from Mus musculus (Mouse).